The sequence spans 372 residues: Fatty acid 2-hydroxylase (372 aa).

The Cytochrome b5 heme-binding domain maps to 8–86; sequence AASFTSAEVQ…LEQYYVGELR (79 aa). Heme contacts are provided by histidine 43 and histidine 69. 2 helical membrane-spanning segments follow: residues 168–188 and 213–233; these read VWYS…WSYY and SVFI…EYLI. In terms of domain architecture, Fatty acid hydroxylase spans 219 to 361; it reads FVLGMLIWTL…TKLWDYFFHT (143 aa). Residues histidine 234, histidine 239, histidine 257, histidine 260, and histidine 261 each coordinate Zn(2+). A run of 2 helical transmembrane segments spans residues 268–288 and 290–310; these read SRLV…YVFL and LILP…GYVL. The Zn(2+) site is built by histidine 315, histidine 319, histidine 336, histidine 339, and histidine 340.

Belongs to the sterol desaturase family. SCS7 subfamily. Requires Zn(2+) as cofactor. Detected in oligodendrocytes (at protein level). Detected in sciatic nerve.

It localises to the endoplasmic reticulum membrane. The protein resides in the microsome membrane. The catalysed reaction is a 1,2-saturated fatty acid + 2 Fe(II)-[cytochrome b5] + O2 + 2 H(+) = a (R)-2-hydroxy fatty acid + 2 Fe(III)-[cytochrome b5] + H2O. The enzyme catalyses hexadecanoate + 2 Fe(II)-[cytochrome b5] + O2 + 2 H(+) = (R)-2-hydroxyhexadecanoate + 2 Fe(III)-[cytochrome b5] + H2O. It catalyses the reaction octadecanoate + 2 Fe(II)-[cytochrome b5] + O2 + 2 H(+) = (R)-2-hydroxyoctadecanoate + 2 Fe(III)-[cytochrome b5] + H2O. It carries out the reaction docosanoate + 2 Fe(II)-[cytochrome b5] + O2 + 2 H(+) = 2-hydroxydocosanoate + 2 Fe(III)-[cytochrome b5] + H2O. The catalysed reaction is tetracosanoate + 2 Fe(II)-[cytochrome b5] + O2 + 2 H(+) = (R)-2-hydroxytetracosanoate + 2 Fe(III)-[cytochrome b5] + H2O. It functions in the pathway lipid metabolism; fatty acid metabolism. The protein operates within sphingolipid metabolism; galactosylceramide biosynthesis. Catalyzes the hydroxylation of free fatty acids at the C-2 position to produce 2-hydroxy fatty acids, which are building blocks of sphingolipids and glycosphingolipids common in neural tissue and epidermis. FA2H is stereospecific for the production of (R)-2-hydroxy fatty acids. Plays an essential role in the synthesis of galactosphingolipids of the myelin sheath. Responsible for the synthesis of sphingolipids and glycosphingolipids involved in the formation of epidermal lamellar bodies critical for skin permeability barrier. Participates in the synthesis of glycosphingolipids and a fraction of type II wax diesters in sebaceous gland, specifically regulating hair follicle homeostasis. Involved in the synthesis of sphingolipids of plasma membrane rafts, controlling lipid raft mobility and trafficking of raft-associated proteins. The sequence is that of Fatty acid 2-hydroxylase from Rattus norvegicus (Rat).